We begin with the raw amino-acid sequence, 324 residues long: Integrin-binding sialoprotein (324 aa).

A signal peptide spans Met1–Ala16. Phosphoserine occurs at positions 31, 67, 75, 76, and 95. 2 disordered regions span residues Val60–Leu228 and Gln243–Ser263. Over residues Ser66–Ala105 the composition is skewed to acidic residues. Polar residues predominate over residues Glu106–Thr130. Asn107 is a glycosylation site (N-linked (GlcNAc...) asparagine). The segment covering Lys141 to Glu154 has biased composition (basic and acidic residues). Ser155 bears the Phosphoserine mark. Residues Ser155–Glu179 show a composition bias toward acidic residues. 3 N-linked (GlcNAc...) asparagine glycosylation sites follow: Asn183, Asn188, and Asn196. Residues Asn203–Ser213 are compositionally biased toward acidic residues. Polar residues predominate over residues Gly253 to Ser263. Residues Arg293 to Asp295 carry the Integrin-binding motif motif. 2 positions are modified to sulfotyrosine: Tyr320 and Tyr321.

Monomer. Interacts with integrins; the interaction promotes cell adhesion.

It localises to the secreted. Binds tightly to hydroxyapatite. Appears to form an integral part of the mineralized matrix. Probably important to cell-matrix interaction. Promotes adhesion and migration of various cells via the alpha-V/beta-3 integrin receptor (ITGAV:ITGB3). The polypeptide is Integrin-binding sialoprotein (Ibsp) (Mus musculus (Mouse)).